The following is a 339-amino-acid chain: Anthranilate phosphoribosyltransferase (339 aa).

5-phospho-alpha-D-ribose 1-diphosphate contacts are provided by residues G81, 84 to 85 (GD), S89, 91 to 94 (NVSS), 109 to 117 (KHGNRALSS), and A121. Anthranilate is bound at residue G81. S93 provides a ligand contact to Mg(2+). N112 is an anthranilate binding site. R167 lines the anthranilate pocket. Mg(2+) is bound by residues D225 and E226.

Belongs to the anthranilate phosphoribosyltransferase family. As to quaternary structure, homodimer. Mg(2+) is required as a cofactor.

It carries out the reaction N-(5-phospho-beta-D-ribosyl)anthranilate + diphosphate = 5-phospho-alpha-D-ribose 1-diphosphate + anthranilate. The protein operates within amino-acid biosynthesis; L-tryptophan biosynthesis; L-tryptophan from chorismate: step 2/5. Catalyzes the transfer of the phosphoribosyl group of 5-phosphorylribose-1-pyrophosphate (PRPP) to anthranilate to yield N-(5'-phosphoribosyl)-anthranilate (PRA). This Brucella ovis (strain ATCC 25840 / 63/290 / NCTC 10512) protein is Anthranilate phosphoribosyltransferase.